Reading from the N-terminus, the 156-residue chain is Organelle RRM domain-containing protein 2, mitochondrial (156 aa).

The N-terminal 28 residues, 1-28, are a transit peptide targeting the mitochondrion; that stretch reads MAMAMRLPAISRAVTEVASAPVGLRRLF. The RRM domain maps to 56–134; that stretch reads TNLFVSGLSK…WVIFAEYARP (79 aa). Serine 64 carries the phosphoserine modification. The span at 137-148 shows a compositional bias: polar residues; the sequence is QSQSYQPQNNMS. The segment at 137 to 156 is disordered; that stretch reads QSQSYQPQNNMSRPPYYGNR.

Interacts with RBG3/ORRM3. Binds to RBG2/ORRM5.

It is found in the mitochondrion. Involved in C-to-U editing of mitochondrial RNA. Functions as minor mitochondrial editing factor. Controls 6 percent of the mitochondrial editing sites. This is Organelle RRM domain-containing protein 2, mitochondrial from Arabidopsis thaliana (Mouse-ear cress).